The following is an 891-amino-acid chain: DNA mismatch repair protein MutS (891 aa).

634–641 (GPNMGGKS) is an ATP binding site.

It belongs to the DNA mismatch repair MutS family.

This protein is involved in the repair of mismatches in DNA. It is possible that it carries out the mismatch recognition step. This protein has a weak ATPase activity. The polypeptide is DNA mismatch repair protein MutS (Burkholderia pseudomallei (strain 1106a)).